A 230-amino-acid chain; its full sequence is Leucyl/phenylalanyl-tRNA--protein transferase (230 aa).

The protein belongs to the L/F-transferase family.

Its subcellular location is the cytoplasm. The enzyme catalyses N-terminal L-lysyl-[protein] + L-leucyl-tRNA(Leu) = N-terminal L-leucyl-L-lysyl-[protein] + tRNA(Leu) + H(+). The catalysed reaction is N-terminal L-arginyl-[protein] + L-leucyl-tRNA(Leu) = N-terminal L-leucyl-L-arginyl-[protein] + tRNA(Leu) + H(+). It carries out the reaction L-phenylalanyl-tRNA(Phe) + an N-terminal L-alpha-aminoacyl-[protein] = an N-terminal L-phenylalanyl-L-alpha-aminoacyl-[protein] + tRNA(Phe). Functionally, functions in the N-end rule pathway of protein degradation where it conjugates Leu, Phe and, less efficiently, Met from aminoacyl-tRNAs to the N-termini of proteins containing an N-terminal arginine or lysine. This is Leucyl/phenylalanyl-tRNA--protein transferase from Syntrophotalea carbinolica (strain DSM 2380 / NBRC 103641 / GraBd1) (Pelobacter carbinolicus).